We begin with the raw amino-acid sequence, 370 residues long: Queuine tRNA-ribosyltransferase (370 aa).

Asp93 acts as the Proton acceptor in catalysis. Substrate contacts are provided by residues 93-97, Asp147, Gln189, and Gly216; that span reads DSGGF. The RNA binding stretch occupies residues 247–253; that stretch reads GVGSPDC. The Nucleophile role is filled by Asp266. The tract at residues 271-275 is RNA binding; important for wobble base 34 recognition; that stretch reads TRIAR. Zn(2+)-binding residues include Cys304, Cys306, Cys309, and His335.

It belongs to the queuine tRNA-ribosyltransferase family. As to quaternary structure, homodimer. Within each dimer, one monomer is responsible for RNA recognition and catalysis, while the other monomer binds to the replacement base PreQ1. It depends on Zn(2+) as a cofactor.

The enzyme catalyses 7-aminomethyl-7-carbaguanine + guanosine(34) in tRNA = 7-aminomethyl-7-carbaguanosine(34) in tRNA + guanine. Its pathway is tRNA modification; tRNA-queuosine biosynthesis. In terms of biological role, catalyzes the base-exchange of a guanine (G) residue with the queuine precursor 7-aminomethyl-7-deazaguanine (PreQ1) at position 34 (anticodon wobble position) in tRNAs with GU(N) anticodons (tRNA-Asp, -Asn, -His and -Tyr). Catalysis occurs through a double-displacement mechanism. The nucleophile active site attacks the C1' of nucleotide 34 to detach the guanine base from the RNA, forming a covalent enzyme-RNA intermediate. The proton acceptor active site deprotonates the incoming PreQ1, allowing a nucleophilic attack on the C1' of the ribose to form the product. After dissociation, two additional enzymatic reactions on the tRNA convert PreQ1 to queuine (Q), resulting in the hypermodified nucleoside queuosine (7-(((4,5-cis-dihydroxy-2-cyclopenten-1-yl)amino)methyl)-7-deazaguanosine). The chain is Queuine tRNA-ribosyltransferase from Pelotomaculum thermopropionicum (strain DSM 13744 / JCM 10971 / SI).